Reading from the N-terminus, the 374-residue chain is Eukaryotic translation initiation factor 3 subunit M (374 aa).

N-acetylserine is present on Ser-2. Ser-2 and Ser-152 each carry phosphoserine. The PCI domain maps to 180–339 (AASKVMVELL…RKVVVSHSTH (160 aa)). N6-acetyllysine is present on Lys-254. Ser-367 carries the phosphoserine modification.

It belongs to the eIF-3 subunit M family. As to quaternary structure, component of the eukaryotic translation initiation factor 3 (eIF-3) complex, which is composed of 13 subunits: EIF3A, EIF3B, EIF3C, EIF3D, EIF3E, EIF3F, EIF3G, EIF3H, EIF3I, EIF3J, EIF3K, EIF3L and EIF3M. The eIF-3 complex appears to include 3 stable modules: module A is composed of EIF3A, EIF3B, EIF3G and EIF3I; module B is composed of EIF3F, EIF3H, and EIF3M; and module C is composed of EIF3C, EIF3D, EIF3E, EIF3K and EIF3L. EIF3C of module C binds EIF3B of module A and EIF3H of module B, thereby linking the three modules. EIF3J is a labile subunit that binds to the eIF-3 complex via EIF3B. The eIF-3 complex interacts with RPS6KB1 under conditions of nutrient depletion. Mitogenic stimulation leads to binding and activation of a complex composed of MTOR and RPTOR, leading to phosphorylation and release of RPS6KB1 and binding of EIF4B to eIF-3.

It localises to the cytoplasm. Component of the eukaryotic translation initiation factor 3 (eIF-3) complex, which is required for several steps in the initiation of protein synthesis. The eIF-3 complex associates with the 40S ribosome and facilitates the recruitment of eIF-1, eIF-1A, eIF-2:GTP:methionyl-tRNAi and eIF-5 to form the 43S pre-initiation complex (43S PIC). The eIF-3 complex stimulates mRNA recruitment to the 43S PIC and scanning of the mRNA for AUG recognition. The eIF-3 complex is also required for disassembly and recycling of post-termination ribosomal complexes and subsequently prevents premature joining of the 40S and 60S ribosomal subunits prior to initiation. The eIF-3 complex specifically targets and initiates translation of a subset of mRNAs involved in cell proliferation, including cell cycling, differentiation and apoptosis, and uses different modes of RNA stem-loop binding to exert either translational activation or repression. The protein is Eukaryotic translation initiation factor 3 subunit M of Pongo abelii (Sumatran orangutan).